The sequence spans 244 residues: Type III pantothenate kinase (244 aa).

Residue 12 to 19 (VVGNTHVR) participates in ATP binding. Residues Tyr-79 and 83 to 86 (GLDR) contribute to the substrate site. The Proton acceptor role is filled by Asp-85. Asp-105 provides a ligand contact to K(+). Position 108 (Thr-108) interacts with ATP. Thr-163 contacts substrate.

It belongs to the type III pantothenate kinase family. In terms of assembly, homodimer. NH4(+) is required as a cofactor. Requires K(+) as cofactor.

The protein resides in the cytoplasm. The enzyme catalyses (R)-pantothenate + ATP = (R)-4'-phosphopantothenate + ADP + H(+). It participates in cofactor biosynthesis; coenzyme A biosynthesis; CoA from (R)-pantothenate: step 1/5. Functionally, catalyzes the phosphorylation of pantothenate (Pan), the first step in CoA biosynthesis. The sequence is that of Type III pantothenate kinase from Synechococcus sp. (strain JA-3-3Ab) (Cyanobacteria bacterium Yellowstone A-Prime).